The following is a 353-amino-acid chain: MNGTEGPFFYVPMVNTTGIVRSPYEYPQYYLVNPAAYAALGAYMFLLILVGFPINFLTLYVTIEHKKLRTPLNYILLNLAVADLFMVLGGFTTTMYTSMHGYFVLGRLGCNIEGFFATLGGEIALWSLVVLAIERWVVVCKPISNFRFGENHAIMGLAFTWTMAMACAAPPLVGWSRYIPEGMQCSCGIDYYTRAEGFNNESFVIYMFICHFTIPLTVVFFCYGRLLCAVKEAAAAQQESETTQRAEKEVTRMVIMMVIAFLVCWLPYASVAWYIFTHQGSEFGPVFMTIPAFFAKSSSIYNPMIYICLNKQFRHCMITTLCCGKNPFEEEEGASTASKTEASSVSSSSVSPA.

Topologically, residues 1–36 are extracellular; that stretch reads MNGTEGPFFYVPMVNTTGIVRSPYEYPQYYLVNPAA. Residues asparagine 2 and asparagine 15 are each glycosylated (N-linked (GlcNAc...) asparagine). Residues 37–61 form a helical membrane-spanning segment; it reads YAALGAYMFLLILVGFPINFLTLYV. The Cytoplasmic segment spans residues 62 to 73; that stretch reads TIEHKKLRTPLN. Residues 74–96 form a helical membrane-spanning segment; the sequence is YILLNLAVADLFMVLGGFTTTMY. Residues 97-110 are Extracellular-facing; the sequence is TSMHGYFVLGRLGC. The cysteines at positions 110 and 187 are disulfide-linked. Residues 111–133 traverse the membrane as a helical segment; it reads NIEGFFATLGGEIALWSLVVLAI. Residues 134–136 carry the 'Ionic lock' involved in activated form stabilization motif; the sequence is ERW. Residues 134–152 lie on the Cytoplasmic side of the membrane; the sequence is ERWVVVCKPISNFRFGENH. Residues 153–173 form a helical membrane-spanning segment; it reads AIMGLAFTWTMAMACAAPPLV. Residues 174–202 are Extracellular-facing; that stretch reads GWSRYIPEGMQCSCGIDYYTRAEGFNNES. Asparagine 200 carries N-linked (GlcNAc...) asparagine glycosylation. A helical transmembrane segment spans residues 203–224; that stretch reads FVIYMFICHFTIPLTVVFFCYG. The Cytoplasmic segment spans residues 225–252; it reads RLLCAVKEAAAAQQESETTQRAEKEVTR. The chain crosses the membrane as a helical span at residues 253-274; it reads MVIMMVIAFLVCWLPYASVAWY. At 275–286 the chain is on the extracellular side; sequence IFTHQGSEFGPV. A helical membrane pass occupies residues 287-308; it reads FMTIPAFFAKSSSIYNPMIYIC. N6-(retinylidene)lysine is present on lysine 296. Residues 309–353 lie on the Cytoplasmic side of the membrane; the sequence is LNKQFRHCMITTLCCGKNPFEEEEGASTASKTEASSVSSSSVSPA. Residues cysteine 322 and cysteine 323 are each lipidated (S-palmitoyl cysteine). The interval 331 to 353 is disordered; sequence EEGASTASKTEASSVSSSSVSPA. Low complexity predominate over residues 334–353; it reads ASTASKTEASSVSSSSVSPA.

It belongs to the G-protein coupled receptor 1 family. Opsin subfamily. Post-translationally, phosphorylated on some or all of the serine and threonine residues present in the C-terminal region. Contains one covalently linked retinal chromophore.

The protein localises to the membrane. It localises to the cell projection. Its subcellular location is the cilium. It is found in the photoreceptor outer segment. In terms of biological role, photoreceptor required for image-forming vision at low light intensity. While most salt water fish species use retinal as chromophore, most freshwater fish use 3-dehydroretinal, or a mixture of retinal and 3-dehydroretinal. Light-induced isomerization of 11-cis to all-trans retinal triggers a conformational change that activates signaling via G-proteins. Subsequent receptor phosphorylation mediates displacement of the bound G-protein alpha subunit by arrestin and terminates signaling. The sequence is that of Rhodopsin (rho) from Diplodus annularis (Annular seabream).